The chain runs to 268 residues: Tetraspanin-5 (268 aa).

At 1–17 (MSGKHYKGPEVSCCIKY) the chain is on the cytoplasmic side. A helical transmembrane segment spans residues 18–38 (FIFGFNVIFWFLGITFLGIGL). Over 39 to 61 (WAWNEKGVLSNISSITDLGGFDP) the chain is Extracellular. N-linked (GlcNAc...) asparagine glycosylation occurs at Asn-49. A helical membrane pass occupies residues 62–82 (VWLFLVVGGVMFILGFAGCIG). Over 83–92 (ALRENTFLLK) the chain is Cytoplasmic. Residues 93–113 (FFSVFLGIIFFLELTAGVLAF) traverse the membrane as a helical segment. The Extracellular segment spans residues 114-232 (VFKDWIKDQL…PQFEKWLQDN (119 aa)). Cystine bridges form between Cys-153–Cys-221, Cys-154–Cys-186, Cys-170–Cys-180, and Cys-187–Cys-200. N-linked (GlcNAc...) asparagine glycosylation is found at Asn-169 and Asn-174. Residue Asn-232 is glycosylated (N-linked (GlcNAc...) asparagine). A helical transmembrane segment spans residues 233-253 (LTIVAGIFIGIALLQIFGICL). At 254-268 (AQNLVSDIEAVRASW) the chain is on the cytoplasmic side.

The protein belongs to the tetraspanin (TM4SF) family. As to quaternary structure, interacts with ADAM10; the interaction influences ADAM10 substrate specificity, endocytosis and turnover. Post-translationally, palmitoylated.

It is found in the cell membrane. Its function is as follows. Part of TspanC8 subgroup, composed of 6 members that interact with the transmembrane metalloprotease ADAM10. This interaction is required for ADAM10 exit from the endoplasmic reticulum and for enzymatic maturation and trafficking to the cell surface as well as substrate specificity. Different TspanC8/ADAM10 complexes have distinct substrates. Promotes ADAM10-mediated cleavage of CD44. Seems to regulate VE-cadherin expression in endothelial cells probably through interaction with ADAM10, promoting leukocyte transmigration. In Homo sapiens (Human), this protein is Tetraspanin-5.